Reading from the N-terminus, the 507-residue chain is Putative propionyl-CoA carboxylase beta chain (507 aa).

The span at 1–25 (MNEHMDHFYTKRKQAEEGGGREKLA) shows a compositional bias: basic and acidic residues. The tract at residues 1-30 (MNEHMDHFYTKRKQAEEGGGREKLAQQRQK) is disordered. A CoA carboxyltransferase N-terminal domain is found at 1-254 (MNEHMDHFYT…NGRTTEPKPE (254 aa)). The segment at 1–501 (MNEHMDHFYT…HKTEERPKKK (501 aa)) is carboxyltransferase. In terms of domain architecture, CoA carboxyltransferase C-terminal spans 256 to 501 (EASRPLLNRL…HKTEERPKKK (246 aa)).

It belongs to the AccD/PCCB family. As to quaternary structure, probably a dodecamer composed of six biotin-containing alpha subunits and six beta subunits.

It catalyses the reaction propanoyl-CoA + hydrogencarbonate + ATP = (S)-methylmalonyl-CoA + ADP + phosphate + H(+). The protein operates within metabolic intermediate metabolism; propanoyl-CoA degradation; succinyl-CoA from propanoyl-CoA: step 1/3. The chain is Putative propionyl-CoA carboxylase beta chain (yqjD) from Bacillus subtilis (strain 168).